Here is a 180-residue protein sequence, read N- to C-terminus: Nucleoside triphosphate/diphosphate phosphatase (180 aa).

Catalysis depends on R26, which acts as the Proton donor. Residues N90, D106, D108, D110, D123, and E126 each contribute to the Mg(2+) site.

Belongs to the Ntdp family. It depends on Mg(2+) as a cofactor.

The enzyme catalyses a ribonucleoside 5'-triphosphate + H2O = a ribonucleoside 5'-diphosphate + phosphate + H(+). The catalysed reaction is a ribonucleoside 5'-diphosphate + H2O = a ribonucleoside 5'-phosphate + phosphate + H(+). Functionally, has nucleoside phosphatase activity towards nucleoside triphosphates and nucleoside diphosphates. This chain is Nucleoside triphosphate/diphosphate phosphatase, found in Staphylococcus aureus (strain Mu3 / ATCC 700698).